Reading from the N-terminus, the 147-residue chain is Myoglobin (147 aa).

The Globin domain maps to 2-141 (ADHDLVLKCW…VIGDIDGYYK (140 aa)). H60 lines the nitrite pocket. An O2-binding site is contributed by H60. Residue H89 coordinates heme b.

This sequence belongs to the globin family. Monomeric.

The protein localises to the cytoplasm. Its subcellular location is the sarcoplasm. The enzyme catalyses Fe(III)-heme b-[protein] + nitric oxide + H2O = Fe(II)-heme b-[protein] + nitrite + 2 H(+). The catalysed reaction is H2O2 + AH2 = A + 2 H2O. Monomeric heme protein which primary function is to store oxygen and facilitate its diffusion within muscle tissues. Reversibly binds oxygen through a pentacoordinated heme iron and enables its timely and efficient release as needed during periods of heightened demand. Depending on the oxidative conditions of tissues and cells, and in addition to its ability to bind oxygen, it also has a nitrite reductase activity whereby it regulates the production of bioactive nitric oxide. Under stress conditions, like hypoxia and anoxia, it also protects cells against reactive oxygen species thanks to its pseudoperoxidase activity. This is Myoglobin (mb) from Danio rerio (Zebrafish).